A 75-amino-acid polypeptide reads, in one-letter code: UPF0352 protein ESA_01049 (75 aa).

It belongs to the UPF0352 family.

The sequence is that of UPF0352 protein ESA_01049 from Cronobacter sakazakii (strain ATCC BAA-894) (Enterobacter sakazakii).